An 818-amino-acid chain; its full sequence is Dipeptidyl aminopeptidase B (818 aa).

The Cytoplasmic portion of the chain corresponds to 1-29 (MEGGEEEVERIPDELFDTKKKHLLDKLIR). A helical; Signal-anchor for type II membrane protein transmembrane segment spans residues 30-45 (VGIILVLLIWGTVLLL). Residues 46 to 818 (KSIPHHSNTP…KRAFDGQFVK (773 aa)) lie on the Lumenal side of the membrane. N-linked (GlcNAc...) asparagine glycans are attached at residues Asn-63, Asn-79, Asn-110, Asn-139, Asn-372, Asn-392, and Asn-421. Ser-679 serves as the catalytic Charge relay system. An N-linked (GlcNAc...) asparagine glycan is attached at Asn-738. Residues Asp-756 and His-789 each act as charge relay system in the active site.

The protein belongs to the peptidase S9B family.

It localises to the vacuole membrane. This Saccharomyces cerevisiae (strain ATCC 204508 / S288c) (Baker's yeast) protein is Dipeptidyl aminopeptidase B (DAP2).